The chain runs to 188 residues: Putative manganese efflux pump MntP (188 aa).

The next 6 membrane-spanning stretches (helical) occupy residues 1 to 21 (MLIQ…AVSI), 40 to 60 (LWFG…ASTF), 64 to 84 (VTAV…GNMV), 105 to 127 (HMLP…FAFM), 131 to 153 (IWLS…LYIG), and 166 to 186 (IAGG…HLGF).

This sequence belongs to the MntP (TC 9.B.29) family.

The protein resides in the cell membrane. In terms of biological role, probably functions as a manganese efflux pump. This is Putative manganese efflux pump MntP from Bifidobacterium adolescentis (strain ATCC 15703 / DSM 20083 / NCTC 11814 / E194a).